A 276-amino-acid chain; its full sequence is 3-methyl-2-oxobutanoate hydroxymethyltransferase (276 aa).

Mg(2+) contacts are provided by D44 and D83. 3-methyl-2-oxobutanoate-binding positions include 44 to 45 (DS), D83, and K112. E114 contacts Mg(2+). E180 (proton acceptor) is an active-site residue. A disordered region spans residues 256 to 276 (PTEAQSSRMKPDELSRALNAE).

This sequence belongs to the PanB family. In terms of assembly, homodecamer; pentamer of dimers. Mg(2+) is required as a cofactor.

It localises to the cytoplasm. It carries out the reaction 3-methyl-2-oxobutanoate + (6R)-5,10-methylene-5,6,7,8-tetrahydrofolate + H2O = 2-dehydropantoate + (6S)-5,6,7,8-tetrahydrofolate. The protein operates within cofactor biosynthesis; (R)-pantothenate biosynthesis; (R)-pantoate from 3-methyl-2-oxobutanoate: step 1/2. Functionally, catalyzes the reversible reaction in which hydroxymethyl group from 5,10-methylenetetrahydrofolate is transferred onto alpha-ketoisovalerate to form ketopantoate. This Gluconacetobacter diazotrophicus (strain ATCC 49037 / DSM 5601 / CCUG 37298 / CIP 103539 / LMG 7603 / PAl5) protein is 3-methyl-2-oxobutanoate hydroxymethyltransferase.